The sequence spans 112 residues: 2Fe-2S ferredoxin (112 aa).

Positions 5 to 107 (IKVTFIINDG…GIKVRLPSAT (103 aa)) constitute a 2Fe-2S ferredoxin-type domain. 4 residues coordinate [2Fe-2S] cluster: C42, C48, C51, and C88.

This sequence belongs to the adrenodoxin/putidaredoxin family. The cofactor is [2Fe-2S] cluster.

Ferredoxin are iron-sulfur proteins that transfer electrons in a wide variety of metabolic reactions. The sequence is that of 2Fe-2S ferredoxin (fdxB) from Rickettsia montanensis.